A 232-amino-acid chain; its full sequence is Replicative helicase loading/DNA remodeling protein DnaD (232 aa).

Positions 1–98 (MKKQQFIDMQ…QNGIKFEKYS (98 aa)) are N-terminal domain. A DDBH1 region spans residues 1 to 116 (MKKQQFIDMQ…YEYIQLAQNQ (116 aa)). Residues 99-205 (LQPLWGKLYE…VEQAKIHSQK (107 aa)) form a C-terminal domain region. Positions 131 to 200 (TIFEEEFARP…NGLKTVEQAK (70 aa)) are DDBH2. A C-terminal tail region spans residues 206-232 (FRRVQAKQNEPQKEYKRQVPFYNWLEQ).

The protein belongs to the DnaB/DnaD family. As to quaternary structure, the DNA replisome assembles sequentially on oriC in this order; DnaA, DnaD, DnaB, DnaI-DnaC helicase. Homodimer. Homotetramer. Oligomerization in vitro is concentration dependent. Part of the replication restart primosome which assembles in this order; PriA, DnaD then DnaB. The preferred DNA substrate mimics an arrested DNA replication fork with unreplicated lagging strand. Interacts with DnaA, DnaB and PriA. Interaction with DnaB requires DnaD to dimerize.

It is found in the cytoplasm. With respect to regulation, recruitment to oriC requires DnaA but not DnaB, DnaC or DnaI and is blocked by SirA. Functionally, required to load replicative helicase DnaC onto replication forks. Binds to a DnaD recognition element (DRE) which has pairs of 5'-TnnT-3' motifs; there is a strong DRE at oriC opposite the DnaA-trios recognized by DnaA. During DNA replication from the origin of replication (oriC) in the DNA replisome, DnaD is required after DnaA, before DnaB and subsequent helicase DnaC loading. A component of the replication restart primosome, which reloads the replicative helicase on sites other than oriC. DnaB, DnaD and DnaI may also be required for a PriA-independent pathway of replication fork restart. DnaB and DnaD work together to allow DnaB access to single-stranded (ss)DNA. Has DNA remodeling activity that converts supercoiled plasmid into an open circular form; DnaD forms scaffolds inside the plasmid DNA. Plasmid relaxation incorporates both wrapping around the DnaD protein scaffold and simultaneous untwisting, no nicking of the DNA is seen. Also converts linear DNA into an open circular form. Disrupts a replicative helicase-DnaI complex. Inhibits the ability of DnaA-ATP to form a helix on DNA; does not disassemble preformed helices in vitro. Binds ssDNA, and replication fork-like substrates, supercoiled plasmid, but not stably to short double-stranded (ds)DNA. DnaD stimulates DnaB DNA-binding activities. DnaB and DnaD are required to load helicase on the repN plasmid origin of replication (oriN). Causes a severe growth defect upon overexpression even in an oriC-independent strain. This is Replicative helicase loading/DNA remodeling protein DnaD from Bacillus subtilis (strain 168).